We begin with the raw amino-acid sequence, 225 residues long: C-reactive protein (225 aa).

Positions 1 to 19 (MEKLLWCSLVMIGFSQAFA) are cleaved as a signal peptide. Gln20 is modified (pyrrolidone carboxylic acid). The Pentraxin (PTX) domain occupies 24-225 (SKTAFVFPKE…DVFIKPQLWP (202 aa)). A disulfide bond links Cys55 and Cys116. Ca(2+) is bound by residues Asn80, Glu157, Gln158, Asp159, and Gln169.

Belongs to the pentraxin family. In terms of assembly, homopentamer. Pentraxin (or pentaxin) have a discoid arrangement of 5 non-covalently bound subunits. Interacts with FCN1; may regulate monocyte activation by FCN1. Requires Ca(2+) as cofactor. As to expression, found in plasma.

The protein resides in the secreted. Displays several functions associated with host defense: it promotes agglutination, bacterial capsular swelling, phagocytosis and complement fixation through its calcium-dependent binding to phosphorylcholine. Can interact with DNA and histones and may scavenge nuclear material released from damaged circulating cells. This is C-reactive protein (CRP) from Mesocricetus auratus (Golden hamster).